The primary structure comprises 352 residues: NADP-dependent oxidoreductase RED1 (352 aa).

NADP(+) contacts are provided by residues 166–169 (GAVG), lysine 192, tyrosine 208, asparagine 231, and 285–287 (FIV).

Belongs to the NADP-dependent oxidoreductase L4BD family.

It participates in mycotoxin biosynthesis. Functionally, NADP-dependent oxidoreductase; part of the Tox1B locus, one of the 2 loci that mediate the biosynthesis of T-toxin, a family of linear polyketides 37 to 45 carbons in length, of which the major component is 41 carbons, and which leads to high virulence to maize. One of the PKSs (PKS1 or PKS2) could synthesize a precursor, used subsequently by the other PKS as starter unit, to add additional carbons. Variability in the length of the final carbon backbone C35-47 could be achieved by varying the number of condensation cycles, or use of different starter or extender units or might be due to decarboxylation of the penultimate product, catalyzed by DEC1. Additional proteins are required for the biosynthesis of T-toxin, including oxidoreductases RED1, RED2, RED3, LAM1 and OXI1, as well as esterase TOX9. This is NADP-dependent oxidoreductase RED1 from Cochliobolus heterostrophus (strain C4 / ATCC 48331 / race T) (Southern corn leaf blight fungus).